Here is an 80-residue protein sequence, read N- to C-terminus: Defensin-like protein 14 (80 aa).

Residues 1–29 (MAKSAAIITFLFAALVLFAAFEAPIMVEA) form the signal peptide. Pyrrolidone carboxylic acid is present on Q30. 4 disulfides stabilise this stretch: C33-C80, C44-C65, C50-C74, and C54-C76.

The protein belongs to the DEFL family.

It is found in the secreted. Functionally, confers broad-spectrum resistance to pathogens. Has antifungal activity in vitro. This chain is Defensin-like protein 14 (PDF1.3), found in Arabidopsis thaliana (Mouse-ear cress).